A 127-amino-acid chain; its full sequence is Spore germination protein 2 (127 aa).

The N-terminal stretch at 1 to 25 (MNIRNSLILIISTILFFSIINGSLS) is a signal peptide. Residues N54 and N118 are each glycosylated (N-linked (GlcNAc...) asparagine).

This sequence belongs to the Dictyostelium gerABC family.

It is found in the secreted. This Dictyostelium discoideum (Social amoeba) protein is Spore germination protein 2 (gerB).